A 2564-amino-acid polypeptide reads, in one-letter code: Spectrin beta chain, non-erythrocytic 4 (2564 aa).

Residues Met-1–Pro-37 are disordered. An actin-binding region spans residues Met-1–His-282. Basic and acidic residues predominate over residues Glu-26–Gln-36. 2 consecutive Calponin-homology (CH) domains span residues Ala-61 to Gln-165 and Arg-180 to Ser-285. Spectrin repeat units follow at residues Ile-311–Arg-418, Leu-430–Gln-533, Ala-536–Glu-641, Ala-774–Asp-879, Tyr-884–Glu-982, Arg-1089–Val-1196, Glu-1306–Phe-1407, Ala-1412–Leu-1512, Lys-1515–Leu-1617, Val-1623–Gln-1725, Trp-1728–Leu-1830, Glu-1835–Arg-1935, Ala-1944–Gln-2046, and Glu-2049–Gln-2123. Residues Lys-1853–Ser-1872 form a disordered region. Residues Pro-2208–Glu-2225 are compositionally biased toward low complexity. Disordered stretches follow at residues Pro-2208 to Asn-2439 and Ala-2533 to Lys-2564. Basic and acidic residues-rich tracts occupy residues Val-2227–Ser-2254, Glu-2268–Ala-2278, and Glu-2287–Lys-2318. Residues Pro-2343–Arg-2355 are compositionally biased toward pro residues. Composition is skewed to basic and acidic residues over residues Leu-2362–Arg-2377 and Phe-2424–Arg-2435. The PH domain maps to Thr-2418–Ala-2527. Positions Thr-2538–Glu-2547 are enriched in polar residues. Over residues Gly-2548–Lys-2564 the composition is skewed to basic and acidic residues.

It belongs to the spectrin family. Expressed in skeletal muscle at the sarcolemma and in the muscle capillaries (at protein level). Abundantly expressed in brain and pancreatic islets.

The protein localises to the cytoplasm. It is found in the cytoskeleton. The protein resides in the cell cortex. The sequence is that of Spectrin beta chain, non-erythrocytic 4 (SPTBN4) from Homo sapiens (Human).